Consider the following 485-residue polypeptide: NADH-quinone oxidoreductase subunit N (485 aa).

The next 14 helical transmembrane spans lie at 8–28 (LIAL…MLSI), 35–55 (FLNA…LWFV), 71–91 (GFAM…CTFA), 105–125 (FYLL…ANHL), 127–147 (SLFL…GYAF), 159–179 (YTIL…LVYA), 203–223 (LLAG…LVPF), 235–255 (PAPV…GVVM), 271–291 (VVLA…ALSQ), 297–317 (LLGY…IALQ), 326–346 (VGVY…VVSL), 373–393 (AAVM…LGFI), 408–430 (WWLV…RVAV), and 455–475 (IVVL…QPLI).

Belongs to the complex I subunit 2 family. In terms of assembly, NDH-1 is composed of 13 different subunits. Subunits NuoA, H, J, K, L, M, N constitute the membrane sector of the complex.

The protein localises to the cell inner membrane. The enzyme catalyses a quinone + NADH + 5 H(+)(in) = a quinol + NAD(+) + 4 H(+)(out). In terms of biological role, NDH-1 shuttles electrons from NADH, via FMN and iron-sulfur (Fe-S) centers, to quinones in the respiratory chain. The immediate electron acceptor for the enzyme in this species is believed to be ubiquinone. Couples the redox reaction to proton translocation (for every two electrons transferred, four hydrogen ions are translocated across the cytoplasmic membrane), and thus conserves the redox energy in a proton gradient. This Escherichia coli O139:H28 (strain E24377A / ETEC) protein is NADH-quinone oxidoreductase subunit N.